Here is a 184-residue protein sequence, read N- to C-terminus: Ribosome maturation factor RimM (184 aa).

Positions 106–184 (PGDYYWYQLE…RMIVDWDPEF (79 aa)) constitute a PRC barrel domain.

Belongs to the RimM family. In terms of assembly, binds ribosomal protein uS19.

The protein resides in the cytoplasm. Its function is as follows. An accessory protein needed during the final step in the assembly of 30S ribosomal subunit, possibly for assembly of the head region. Essential for efficient processing of 16S rRNA. May be needed both before and after RbfA during the maturation of 16S rRNA. It has affinity for free ribosomal 30S subunits but not for 70S ribosomes. The polypeptide is Ribosome maturation factor RimM (Chromohalobacter salexigens (strain ATCC BAA-138 / DSM 3043 / CIP 106854 / NCIMB 13768 / 1H11)).